A 517-amino-acid chain; its full sequence is ATP synthase subunit alpha 1 (517 aa).

Residue 174 to 181 coordinates ATP; the sequence is GDRQTGKT.

The protein belongs to the ATPase alpha/beta chains family. In terms of assembly, F-type ATPases have 2 components, CF(1) - the catalytic core - and CF(0) - the membrane proton channel. CF(1) has five subunits: alpha(3), beta(3), gamma(1), delta(1), epsilon(1). CF(0) has three main subunits: a(1), b(2) and c(9-12). The alpha and beta chains form an alternating ring which encloses part of the gamma chain. CF(1) is attached to CF(0) by a central stalk formed by the gamma and epsilon chains, while a peripheral stalk is formed by the delta and b chains.

It is found in the cell inner membrane. The enzyme catalyses ATP + H2O + 4 H(+)(in) = ADP + phosphate + 5 H(+)(out). Functionally, produces ATP from ADP in the presence of a proton gradient across the membrane. The alpha chain is a regulatory subunit. This is ATP synthase subunit alpha 1 from Albidiferax ferrireducens (strain ATCC BAA-621 / DSM 15236 / T118) (Rhodoferax ferrireducens).